Reading from the N-terminus, the 406-residue chain is uncharacterized protein (406 aa).

Polar residues predominate over residues 136-153 (SQKNWGSEKNWNSPSQGP). Positions 136-157 (SQKNWGSEKNWNSPSQGPASRE) are disordered.

This is an uncharacterized protein from Rattus norvegicus (Rat).